Consider the following 554-residue polypeptide: Glucose-6-phosphate isomerase (554 aa).

Catalysis depends on E359, which acts as the Proton donor. Catalysis depends on residues H390 and K518.

It belongs to the GPI family.

It localises to the cytoplasm. It carries out the reaction alpha-D-glucose 6-phosphate = beta-D-fructose 6-phosphate. It participates in carbohydrate biosynthesis; gluconeogenesis. It functions in the pathway carbohydrate degradation; glycolysis; D-glyceraldehyde 3-phosphate and glycerone phosphate from D-glucose: step 2/4. Functionally, catalyzes the reversible isomerization of glucose-6-phosphate to fructose-6-phosphate. The protein is Glucose-6-phosphate isomerase of Pseudomonas putida (strain ATCC 700007 / DSM 6899 / JCM 31910 / BCRC 17059 / LMG 24140 / F1).